Consider the following 613-residue polypeptide: Chaperone protein DnaK (613 aa).

The tract at residues 579 to 613 (MYQSASSTTQTGSGNQNSSKQENDKTVDAEYKEKS) is disordered. Residues 581 to 597 (QSASSTTQTGSGNQNSS) are compositionally biased toward low complexity. The span at 599 to 613 (QENDKTVDAEYKEKS) shows a compositional bias: basic and acidic residues.

Belongs to the heat shock protein 70 family.

Acts as a chaperone. The chain is Chaperone protein DnaK from Thermoplasma volcanium (strain ATCC 51530 / DSM 4299 / JCM 9571 / NBRC 15438 / GSS1).